Consider the following 669-residue polypeptide: Putative heme-binding protein rrnAC3100 (669 aa).

H181 is a heme binding site. Disordered stretches follow at residues 260 to 351 (RVPT…PDVS) and 451 to 477 (LGGS…ESSQ). Residues 579–667 (GTMGMFYTVK…VLADRPRHVF (89 aa)) enclose the ABM domain.

The protein in the N-terminal section; belongs to the ChdC family.

The sequence is that of Putative heme-binding protein rrnAC3100 from Haloarcula marismortui (strain ATCC 43049 / DSM 3752 / JCM 8966 / VKM B-1809) (Halobacterium marismortui).